The sequence spans 223 residues: GTP cyclohydrolase 1 (223 aa).

3 residues coordinate Zn(2+): Cys-114, His-117, and Cys-185.

Belongs to the GTP cyclohydrolase I family. As to quaternary structure, homomer.

It catalyses the reaction GTP + H2O = 7,8-dihydroneopterin 3'-triphosphate + formate + H(+). It functions in the pathway cofactor biosynthesis; 7,8-dihydroneopterin triphosphate biosynthesis; 7,8-dihydroneopterin triphosphate from GTP: step 1/1. This chain is GTP cyclohydrolase 1, found in Chlorobium chlorochromatii (strain CaD3).